The chain runs to 91 residues: Small ribosomal subunit protein bS18 (91 aa).

A disordered region spans residues 1–21 (MSDERAPQRSTGPRKKRPFQR). Over residues 12-21 (GPRKKRPFQR) the composition is skewed to basic residues.

This sequence belongs to the bacterial ribosomal protein bS18 family. Part of the 30S ribosomal subunit. Forms a tight heterodimer with protein bS6.

Binds as a heterodimer with protein bS6 to the central domain of the 16S rRNA, where it helps stabilize the platform of the 30S subunit. In Geotalea daltonii (strain DSM 22248 / JCM 15807 / FRC-32) (Geobacter daltonii), this protein is Small ribosomal subunit protein bS18.